A 635-amino-acid polypeptide reads, in one-letter code: MLNRIQTLMKTANNYETIEILRNYLRLYIILARNEEGHGILIYDDNIDSVMSMMNITILEVIGLTTHCTKLRSSPPIPMSRLFMDEIDHESYYSPKTSDYPLIDIIRKRSHEQGDIALALERYGIENTDSISEINEWLSSKGLACYRFVKFNDYRKQMYRKFSRCTIVDSMIIGHIGHHYIWIKNLETYTRPEIDVLPFDIKYISRDELWARISSSLDQTHIKTIAVSVYGAITDNGPIPYMISTYPGNTFVNFNSVKNLILNFLDWIKDIMTSTRTIILVGYMSNLFDIPLLTVYWPNNCGWKIYNNTLISSDGARVIWMDAYKFSCGLSLQDYCYHWGSKPESRPFDLIKKSDAKRNSKSLVKESMASLKSLYEAFETQSGALEVLMSPCRMFSFSRIEDMFLTSVINRVSENTGMGMYYPTNDIPSLFIESSICLDYIIVNNQESNKYRIKSVLDIISSKQYPAGRPNYVKNGTKGKLYIALCKVTVPTNDHIPVVYHDDDNTTTFITVLTSVDIETAIRAGYSIVELGALQWDNNIPELKNGLLDSIKMIYDLNAVTTNNLLEQLIENINFNNSSIISLFYTFAISYCRAFIYSIMETIDPVYISQFSYKELYVSSSYKDINESMSQMVKL.

Belongs to the orthopoxvirus OPG056 family. In terms of assembly, interacts with protein OPG164. Interacts with protein OPG064.

It localises to the virion membrane. The protein localises to the host endosome. Its function is as follows. Plays a role in intracellular enveloped virus (IEV) transport to the cell surface through microtubule transport. Together with protein OPG064, forms a complex that interacts with host KLC2 (kinesin light chain isoform 2) to engage the kinesin-1 complex and thereby promote IEV trafficking. The chain is Protein OPG056 (OPG056) from Homo sapiens (Human).